The chain runs to 79 residues: Tau-theraphotoxin-Hs1a (79 aa).

6 disulfide bridges follow: Cys-2–Cys-16, Cys-9–Cys-23, Cys-15–Cys-31, Cys-44–Cys-58, Cys-51–Cys-63, and Cys-57–Cys-71. Domain repeat units lie at residues 2–31 (CAKEGEVCSWGKKCCDLDNFYCPMEFIPHC) and 42–71 (TNCAKEGEVCGWGSKCCHGLDCPLAFIPYC). The interval 2–71 (CAKEGEVCSW…DCPLAFIPYC (70 aa)) is 2 X approximate repeats with cysteine pattern C-C-CC-C-C.

It belongs to the neurotoxin 23 family. Double-knot toxin subfamily. As to quaternary structure, interacts with TRPV1 (2 toxins (4 moieties) bind 1 channel (homotetramer)). As to expression, expressed by the venom gland.

The protein localises to the secreted. Functionally, selectively activates the heat-activated TRPV1 channel. It binds to TRPV1 in an open state-dependent manner, trapping it there to produce irreversible currents. It binds to the outer edge of the external pore of TRPV1 in a counterclockwise configuration, using a limited protein-protein interface and inserting hydrophobic residues into the bilayer. It also partitions naturally into membranes, with the two lobes exhibiting opposing energetics for membrane partitioning (K1) and channel activation (K2). In addition, the toxin disrupts a cluster of hydrophobic residues behind the selectivity filter that are critical for channel activation. This Cyriopagopus schmidti (Chinese bird spider) protein is Tau-theraphotoxin-Hs1a.